The primary structure comprises 743 residues: Polyribonucleotide nucleotidyltransferase (743 aa).

Residues D489 and D495 each coordinate Mg(2+). One can recognise a KH domain in the interval P556–I618. The S1 motif domain maps to G628 to K698. The interval P704 to G743 is disordered.

This sequence belongs to the polyribonucleotide nucleotidyltransferase family. Mg(2+) serves as cofactor.

It localises to the cytoplasm. The catalysed reaction is RNA(n+1) + phosphate = RNA(n) + a ribonucleoside 5'-diphosphate. Involved in mRNA degradation. Catalyzes the phosphorolysis of single-stranded polyribonucleotides processively in the 3'- to 5'-direction. This Porphyromonas gingivalis (strain ATCC BAA-308 / W83) protein is Polyribonucleotide nucleotidyltransferase.